The primary structure comprises 527 residues: ATP synthase subunit alpha (527 aa).

Residue 172–179 (GDRQTGKT) participates in ATP binding.

Belongs to the ATPase alpha/beta chains family. F-type ATPases have 2 components, CF(1) - the catalytic core - and CF(0) - the membrane proton channel. CF(1) has five subunits: alpha(3), beta(3), gamma(1), delta(1), epsilon(1). CF(0) has three main subunits: a(1), b(2) and c(9-12). The alpha and beta chains form an alternating ring which encloses part of the gamma chain. CF(1) is attached to CF(0) by a central stalk formed by the gamma and epsilon chains, while a peripheral stalk is formed by the delta and b chains.

It is found in the cell inner membrane. It carries out the reaction ATP + H2O + 4 H(+)(in) = ADP + phosphate + 5 H(+)(out). In terms of biological role, produces ATP from ADP in the presence of a proton gradient across the membrane. The alpha chain is a regulatory subunit. The protein is ATP synthase subunit alpha of Bacteroides thetaiotaomicron (strain ATCC 29148 / DSM 2079 / JCM 5827 / CCUG 10774 / NCTC 10582 / VPI-5482 / E50).